Reading from the N-terminus, the 161-residue chain is MKYDTSELCDIYQEDVNVVEPLFSNFGGRASFGGQIITVKCFEDNGLLYDLLEQNGRGRVLVVDGGGSVRRALVDAELTRLAVQNEWEGLVIYGAVRQVDDLEELDIGIQAMAAIPVGAAGEGIGESDVRVNFGGVTFFSGDHLYADNTGIILSEDPLDIE.

This sequence belongs to the RraA family. Homotrimer. Binds to both RNA-binding sites in the C-terminal region of Rne and to RhlB.

It is found in the cytoplasm. In terms of biological role, globally modulates RNA abundance by binding to RNase E (Rne) and regulating its endonucleolytic activity. Can modulate Rne action in a substrate-dependent manner by altering the composition of the degradosome. Modulates RNA-binding and helicase activities of the degradosome. This chain is Regulator of ribonuclease activity A, found in Escherichia fergusonii (strain ATCC 35469 / DSM 13698 / CCUG 18766 / IAM 14443 / JCM 21226 / LMG 7866 / NBRC 102419 / NCTC 12128 / CDC 0568-73).